The chain runs to 280 residues: Fructose-1,6-bisphosphatase class 1 (280 aa).

Positions 64, 83, 85, and 86 each coordinate Mg(2+). Residues 86–89, Tyr-189, and Lys-220 contribute to the substrate site; that span reads DGSS. Residue Glu-226 participates in Mg(2+) binding.

The protein belongs to the FBPase class 1 family. Homotetramer. Mg(2+) is required as a cofactor.

It is found in the cytoplasm. It carries out the reaction beta-D-fructose 1,6-bisphosphate + H2O = beta-D-fructose 6-phosphate + phosphate. It participates in carbohydrate biosynthesis; gluconeogenesis. The sequence is that of Fructose-1,6-bisphosphatase class 1 from Campylobacter jejuni subsp. jejuni serotype O:2 (strain ATCC 700819 / NCTC 11168).